The primary structure comprises 954 residues: MSQTPSSLRDLEHHSAFVERHIGPNDAEIAQMLDVVGHACLDALTDAIVPGNIKSPAPLALPEAITEEEALAKIRAIADKNTVFRNFIGQGYYGTHTPKVILRNILENPAWYTAYTPYQAEISQGRMEALINFQTLCADLTGMQIANASLLDEATAAAEAMTLAKRSAKSRSNTFFVHDAVHPQTLELLRTRAEPLDIVLRVGTPEEALQAECFGVLLQYPDSFGHIGDHAALADAVHAQGGLVAVATDLLALTLIAAPGEWGADIVVGNSQRFGVPFGFGGPHAAFMACRDAYKRSMPGRLIGVSIDAAGNPAYRLTLQTREQHIRREKATSNICTAQVLLAVMASMYAVYHGPDGLTRIARRTHRLAAILAAALRSAGVTVGERFFDTLHVKAIDANAIHARARAAGINLRAIDSEAVGISLDETSTRADVVALAALFGAQADVDALDAATADALPQGLLRTTPFLTHPVFNTHHSEHELLRYMRSLADKDLAMDRTMIPLGSCTMKLNATAEMIPVTWPEFGAIHPLAPAEQSAGYAQLIDELEAMLVECTGYDAVSLQPNSGAQGEYAGLLAIRAYHRSRGEAHRDICLIPESAHGTNPASAQMCGMTVVVTKCDANGNVDVDDIRAKAEKYSDRLAALMITYPSTHGVFEEDVVAICEAVHAHGGQVYTDGANMNALVGVAKPGKWGSDVSHLNLHKTFCIPHGGGGPGVGPCAVKSHLAPYLPKTLGGEGDVGMVSAASYGSASILPISWMYVTMMGSAGLRKATQVALLNANYIAKRLAPHYKTLYTGRNGLVAHECILDVRPLEKTSGIGAEDIAKRLIDFGFHAPTLSFPVAGTLMVEPTESESQHELDRFIDAMIQIREEIRAIEDGRLDREDNPLKHAPHTATQVSASEWTHAYPRELAAFPLPSLKQQKYWPPVARVDNVYGDKNVMCACIPVDAYKEDVEA.

The residue at position 702 (K702) is an N6-(pyridoxal phosphate)lysine.

This sequence belongs to the GcvP family. In terms of assembly, the glycine cleavage system is composed of four proteins: P, T, L and H. Requires pyridoxal 5'-phosphate as cofactor.

The enzyme catalyses N(6)-[(R)-lipoyl]-L-lysyl-[glycine-cleavage complex H protein] + glycine + H(+) = N(6)-[(R)-S(8)-aminomethyldihydrolipoyl]-L-lysyl-[glycine-cleavage complex H protein] + CO2. In terms of biological role, the glycine cleavage system catalyzes the degradation of glycine. The P protein binds the alpha-amino group of glycine through its pyridoxal phosphate cofactor; CO(2) is released and the remaining methylamine moiety is then transferred to the lipoamide cofactor of the H protein. This Xanthomonas euvesicatoria pv. vesicatoria (strain 85-10) (Xanthomonas campestris pv. vesicatoria) protein is Glycine dehydrogenase (decarboxylating).